The following is a 301-amino-acid chain: tRNA pseudouridine synthase B (301 aa).

The active-site Nucleophile is the aspartate 38.

This sequence belongs to the pseudouridine synthase TruB family. Type 1 subfamily.

The enzyme catalyses uridine(55) in tRNA = pseudouridine(55) in tRNA. Its function is as follows. Responsible for synthesis of pseudouridine from uracil-55 in the psi GC loop of transfer RNAs. The chain is tRNA pseudouridine synthase B from Clostridioides difficile (strain 630) (Peptoclostridium difficile).